Here is a 1227-residue protein sequence, read N- to C-terminus: MELHVQLKHSTDCFVSLPPKIVHSLLLLSEKQSKSLGTLGLEITWYDKINKKENKGYVGWAGGSTDPRFTDSIEMSQEMAQCLGGIKNEQKLKLKALNNIELAHSVQVEPLTSDDWEIMEVHQQYLEEQLLNQVNILYSGQIVPIWIHHKTIIKLKVTETLPTPVVKLSSNSEIIVAPKPRNLPTTTTSSQQQQISKETLKPRFLQIKDFKIDYNNNNTFINEIYINKELLNQFQWNIGDIIEISKVSKNNNKNNKKEKNNNGGDEEEDDDDNEEFDDDDDDDNNNNEDDTSKLQKQLDNKNNNNKKNKKNNKTIYARVFINDKSNNQQVLIHRNIRTIGNFYINTIVRLKYTTSHSLPICPIGSILVKQVIWKQNSLSNLIKQQSSQKIYSVEQIKEQIKVWSNNNLSNNQRYPLLNGSIVSINSNLDLSFNFNNLTSSIIPPTSSSSSSPSNNLDSQRSNNNNNNINNDQLNDITNNMNNPYLSSIQQIGDIMSNLNTNNNQNNQNNNSNKLMNQFQMNNGIFMLSLEILSNDKLLKIESGGNNSIEKKKSLEDYNEIGDRLFQRIGGMEKQIKQAKEFLSLYMYKDLSVIREQLNTPGVNGMIIAGSHGSGKSLLATSLGGYYSTDSRSNAFIIKLDCNQLKELKVENIRKQFNKLFYKSCKESGNTLSATTSTNTTPPPIIIILESLDLILGTPNDQDPGSKIRCEQLVSHIKSLCFKYQNRSSPIVMIATVISSQSLCQSIQIPELFGLTIELQAPTREERVEILERYLKYQGKQLKDQQSLNLMKFSASMEGYLGCDVEQIVDRSIHLSSIKEIENNNNNNDDNDDDNIIEFSIIEKAKEGYTPITLKGIKLHSSEIKWQDIGGLDSVRAMLKETIEWPTKYPKLFQSSPLRLRSGILLYGPTGCGKTLLASAIAGECGLNFISVKGPELLNKYIGSSEQGVRDVFSRASSAKPCVLFFDEFDSIAPRRGHDNSGVTDRVVNQFLTQLDGVEGLTGVYVLAATSRPDLIDPALLRPGRLDKSLYCNIPEFNERLDILTCLKSKMNLSPSISLEQLSTNTQYYTGADLRALMYNAQLKSIHEWMNHLEEEKKRKRKEKEDQSNKNSSQQQDDFIIFQPKNNDNSISKSNLTFEEKTNLQKQIDTIKSQFINSNTSTLNKSNLSNEQPPLITQSHIDLALKESSPSISESERKKYERIYNNFLKERGSVTGNKKEGVPKQTLA.

Disordered regions lie at residues 251-311 and 443-480; these read NNKN…NKKN and PPTS…TNNM. A compositionally biased stretch (acidic residues) spans 264 to 289; it reads GDEEEDDDDNEEFDDDDDDDNNNNED. 2 coiled-coil regions span residues 282–315 and 454–519; these read DDNN…NKTI and NNLD…NQFQ. The span at 290 to 299 shows a compositional bias: basic and acidic residues; the sequence is DTSKLQKQLD. Residues 609–616 and 907–914 each bind ATP; these read GSHGSGKS and GPTGCGKT. The segment covering 1096 to 1107 has biased composition (basic and acidic residues); that stretch reads KKRKRKEKEDQS. The segment at 1096 to 1132 is disordered; it reads KKRKRKEKEDQSNKNSSQQQDDFIIFQPKNNDNSISK. Over residues 1108–1117 the composition is skewed to low complexity; that stretch reads NKNSSQQQDD. Positions 1123-1132 are enriched in polar residues; it reads PKNNDNSISK.

The protein belongs to the AAA ATPase family. Interacts with PEX6; forming the PEX1-PEX6 AAA ATPase complex, which is composed of a heterohexamer formed by a trimer of PEX1-PEX6 dimers.

The protein localises to the cytoplasm. The protein resides in the cytosol. Its subcellular location is the peroxisome membrane. It catalyses the reaction ATP + H2O = ADP + phosphate + H(+). Component of the PEX1-PEX6 AAA ATPase complex, a protein dislocase complex that mediates the ATP-dependent extraction of the PEX5 receptor from peroxisomal membranes, an essential step for PEX5 recycling. Specifically recognizes PEX5 monoubiquitinated at 'Cys-11', and pulls it out of the peroxisome lumen through the PEX2-PEX10-PEX12 retrotranslocation channel. Extraction by the PEX1-PEX6 AAA ATPase complex is accompanied by unfolding of the TPR repeats and release of bound cargo from PEX5. The protein is Peroxisomal ATPase PEX1 (pex1) of Dictyostelium discoideum (Social amoeba).